The chain runs to 165 residues: MLTKRLLTIYIMLLGLIAWFPGAAQAEEKQPAVPAVFLMKTIEGEDISIPNKGQKTILHFWTSWCPPCKKELPQFQSFYDAHPSDSVKLVTVNLVNSEQNQQVVEDFIKANKLTFPIVLDSKGELMKEYHIITIPTSFLLNEKGEIEKTKIGPMTAEQLKEWTEE.

Residues M1–A26 form the signal peptide. The Thioredoxin domain occupies E27–E165. C65 and C68 are oxidised to a cystine.

It belongs to the thioredoxin family.

The protein localises to the spore outer membrane. Its function is as follows. Thiol-disulfide oxidoreductase with a reductive function, involved in spore cortex synthesis. It could be involved either in breaking disulfide bonds in cortex components or in proteins that are important for cortex synthesis, or in thiol/disulfide bond interchange. This is Sporulation thiol-disulfide oxidoreductase A (stoA) from Bacillus subtilis (strain 168).